A 251-amino-acid chain; its full sequence is CDP-diacylglycerol pyrophosphatase (251 aa).

Residues 4–24 (AGLLFLVMIVIAVVAAGIGYW) form a helical membrane-spanning segment.

The protein belongs to the Cdh family.

Its subcellular location is the cell inner membrane. The catalysed reaction is a CDP-1,2-diacyl-sn-glycerol + H2O = a 1,2-diacyl-sn-glycero-3-phosphate + CMP + 2 H(+). It functions in the pathway phospholipid metabolism; CDP-diacylglycerol degradation; phosphatidate from CDP-diacylglycerol: step 1/1. The polypeptide is CDP-diacylglycerol pyrophosphatase (Shigella boydii serotype 4 (strain Sb227)).